The following is a 335-amino-acid chain: Hsp90 co-chaperone Cdc37-like 1 (335 aa).

Pro residues predominate over residues 1–11 (MEQPWPPPGPW). Residues 1–42 (MEQPWPPPGPWSFPRTGGETEEESDLDVSPSSSHYSPVPDGG) are disordered. The self-association stretch occupies residues 2–170 (EQPWPPPGPW…YEQKIRHFGM (169 aa)). Over residues 27 to 40 (DVSPSSSHYSPVPD) the composition is skewed to low complexity. 2 positions are modified to phosphoserine: serine 32 and serine 88. Positions 84–120 (HNSESLDQEHAKAQTAVSELRQREEEWRQKEEALVQR) form a coiled coil. The segment at 147–276 (KTEEEDKSQS…SRVRLYAQSQ (130 aa)) is self-association and interaction with Hsp90. The interaction with Hsp70 stretch occupies residues 266 to 335 (KSRVRLYAQS…EDDDRMMDTV (70 aa)). The required for interaction with STIP1 stretch occupies residues 277–335 (SLQPVTVQNHVPHSGVGCIGSLESLPQNPDSLQCCTPAPLCSVDSVVHKEDDDRMMDTV).

The protein belongs to the CDC37 family. As to quaternary structure, self-associates. Forms complexes with Hsp70 and Hsp90. Interacts with CDC37, FKBP4, PPID and STIP1.

The protein localises to the cytoplasm. In terms of biological role, co-chaperone that binds to numerous proteins and promotes their interaction with Hsp70 and Hsp90. The chain is Hsp90 co-chaperone Cdc37-like 1 (Cdc37l1) from Mus musculus (Mouse).